The following is an 87-amino-acid chain: Homeotic protein ultrabithorax (87 aa).

The Antp-type hexapeptide motif lies at 22–27; that stretch reads FYPWMA.

It belongs to the Antp homeobox family. As to expression, in the embryo, expression is seen in the epidermis, somatic and visceral mesoderm, and the peripheral and central nervous system.

Its subcellular location is the nucleus. In terms of biological role, sequence-specific transcription factor which is part of a developmental regulatory system that provides cells with specific positional identities on the anterior-posterior axis. Binds the consensus region 5'-TTAAT[GT][GA]-3'. This homeotic protein controls development of the cells in the posterior thoracic and first abdominal segments. It activates the synthesis of the decapentaplegic (DPP) growth factor. The chain is Homeotic protein ultrabithorax (Ubx) from Drosophila virilis (Fruit fly).